Reading from the N-terminus, the 397-residue chain is Phosphoglycerate kinase (397 aa).

Residues 21 to 23 (DFN), R36, 59 to 62 (HCGR), R118, and R151 each bind substrate. Residues K201, E323, and 353-356 (GGDT) contribute to the ATP site.

This sequence belongs to the phosphoglycerate kinase family. As to quaternary structure, monomer.

It is found in the cytoplasm. The catalysed reaction is (2R)-3-phosphoglycerate + ATP = (2R)-3-phospho-glyceroyl phosphate + ADP. It functions in the pathway carbohydrate degradation; glycolysis; pyruvate from D-glyceraldehyde 3-phosphate: step 2/5. The chain is Phosphoglycerate kinase from Bartonella henselae (strain ATCC 49882 / DSM 28221 / CCUG 30454 / Houston 1) (Rochalimaea henselae).